Reading from the N-terminus, the 238-residue chain is Deoxyribose-phosphate aldolase (238 aa).

The active-site Proton donor/acceptor is the aspartate 104. Lysine 168 serves as the catalytic Schiff-base intermediate with acetaldehyde. The active-site Proton donor/acceptor is the lysine 197.

This sequence belongs to the DeoC/FbaB aldolase family. DeoC type 1 subfamily.

Its subcellular location is the cytoplasm. It carries out the reaction 2-deoxy-D-ribose 5-phosphate = D-glyceraldehyde 3-phosphate + acetaldehyde. It functions in the pathway carbohydrate degradation; 2-deoxy-D-ribose 1-phosphate degradation; D-glyceraldehyde 3-phosphate and acetaldehyde from 2-deoxy-alpha-D-ribose 1-phosphate: step 2/2. Its function is as follows. Catalyzes a reversible aldol reaction between acetaldehyde and D-glyceraldehyde 3-phosphate to generate 2-deoxy-D-ribose 5-phosphate. This Bacteroides thetaiotaomicron (strain ATCC 29148 / DSM 2079 / JCM 5827 / CCUG 10774 / NCTC 10582 / VPI-5482 / E50) protein is Deoxyribose-phosphate aldolase.